Here is a 556-residue protein sequence, read N- to C-terminus: Myb/SANT-like DNA-binding domain-containing protein 2 (556 aa).

2 stretches are compositionally biased toward polar residues: residues 1 to 10 and 36 to 45; these read MAASCGSSQL and GNPSLSDPST. Residues 1–82 are disordered; the sequence is MAASCGSSQL…GGASPSVSFS (82 aa). Over residues 56-74 the composition is skewed to gly residues; it reads PAAGGAGLGGGGAAGGRGG. The region spanning 99–169 is the Myb-like domain; it reads SWTPAETNAL…QCRERIKTLR (71 aa). Residues 431 to 458 form a disordered region; the sequence is PRSPLAEPRGADPSNETPGELEVPSPQA.

In Gallus gallus (Chicken), this protein is Myb/SANT-like DNA-binding domain-containing protein 2 (MSANTD2).